The primary structure comprises 115 residues: Salivary anti-complement protein (115 aa).

The N-terminal stretch at 1-22 (MKFFYLIFSAIFFLADPALVKC) is a signal peptide. Cystine bridges form between Cys-26/Cys-108, Cys-41/Cys-92, and Cys-83/Cys-101.

May form multimers. Salivary gland (at protein level).

Its subcellular location is the secreted. Salivary protein that inhibits the classical pathway of complement system activation in the host while having no inhibitory effect on the alternative or lectin pathways. Prevent cleavage of host C4 and consequently impairs the activation of factors downstream of C4b in the complement cascade. This Lutzomyia longipalpis (Sand fly) protein is Salivary anti-complement protein.